Here is a 123-residue protein sequence, read N- to C-terminus: Small ribosomal subunit protein uS12 (123 aa).

Residues 1-24 (MPTINQLIRKERKKQVKKSKSPAL) form a disordered region. Positions 10–20 (KERKKQVKKSK) are enriched in basic residues. D89 bears the 3-methylthioaspartic acid mark.

Belongs to the universal ribosomal protein uS12 family. Part of the 30S ribosomal subunit. Contacts proteins S8 and S17. May interact with IF1 in the 30S initiation complex.

Functionally, with S4 and S5 plays an important role in translational accuracy. In terms of biological role, interacts with and stabilizes bases of the 16S rRNA that are involved in tRNA selection in the A site and with the mRNA backbone. Located at the interface of the 30S and 50S subunits, it traverses the body of the 30S subunit contacting proteins on the other side and probably holding the rRNA structure together. The combined cluster of proteins S8, S12 and S17 appears to hold together the shoulder and platform of the 30S subunit. This is Small ribosomal subunit protein uS12 from Sulfurovum sp. (strain NBC37-1).